The chain runs to 325 residues: ADP-ribose glycohydrolase MACROD1 (325 aa).

The segment at 21–55 is disordered; sequence LGAPRPWPGPSPGATRTRSSACGPPASLSAHHPRA. Lys96, Lys103, and Lys129 each carry N6-succinyllysine. Lys138 participates in a covalent cross-link: Glycyl lysine isopeptide (Lys-Gly) (interchain with G-Cter in SUMO2). A Macro domain is found at 141–322; that stretch reads EPKYKKDKQL…IYRERLPHYF (182 aa). 159–161 is a substrate binding site; that stretch reads GDI. N6-acetyllysine is present on Lys163. Substrate contacts are provided by residues 172 to 174, 179 to 184, 267 to 273, and Phe306; these read AAN, GGGGVD, and ISTGVFG.

Belongs to the MacroD-type family. MacroD1/2-like subfamily. As to quaternary structure, interacts with ESR1; Interacts in a manner that is estrogen independent but is enhanced by estrogen. Interacts (via macro domain) with AR.

The protein localises to the nucleus. It carries out the reaction 3''-O-acetyl-ADP-D-ribose + H2O = ADP-D-ribose + acetate + H(+). It catalyses the reaction 2''-O-acetyl-ADP-D-ribose + H2O = ADP-D-ribose + acetate + H(+). The catalysed reaction is 4-O-(ADP-D-ribosyl)-L-aspartyl-[protein] + H2O = L-aspartyl-[protein] + ADP-D-ribose + H(+). The enzyme catalyses 5-O-(ADP-D-ribosyl)-L-glutamyl-[protein] + H2O = L-glutamyl-[protein] + ADP-D-ribose + H(+). It carries out the reaction alpha-NAD(+) + H2O = ADP-D-ribose + nicotinamide + H(+). Subject to competitive inhibition by the product ADP-ribose. Its function is as follows. Removes ADP-ribose from aspartate and glutamate residues in proteins bearing a single ADP-ribose moiety. Inactive towards proteins bearing poly-ADP-ribose. Deacetylates O-acetyl-ADP ribose, a signaling molecule generated by the deacetylation of acetylated lysine residues in histones and other proteins. Plays a role in estrogen signaling. Binds to androgen receptor (AR) and amplifies the transactivation function of AR in response to androgen. May play an important role in carcinogenesis and/or progression of hormone-dependent cancers by feed-forward mechanism that activates ESR1 transactivation. Could be an ESR1 coactivator, providing a positive feedback regulatory loop for ESR1 signal transduction. Could be involved in invasive growth by down-regulating CDH1 in endometrial cancer cells. Enhances ESR1-mediated transcription activity. This is ADP-ribose glycohydrolase MACROD1 (MACROD1) from Bos taurus (Bovine).